The following is a 555-amino-acid chain: CCR4-NOT transcription complex subunit 6-like (555 aa).

Residues 1-152 (MRLIGMPKEK…SLYQDPDGTR (152 aa)) form a required for interaction with CNOT1, CNOT3 and CNOT7 region. 4 LRR repeats span residues 57-78 (HLTA…IAKL), 80-101 (NLVY…LGNM), 103-125 (SLRE…GRLF), and 126-148 (QLQT…YQDP). Positions 158–555 (MLDNLAVHPE…VNGVHLPNRR (398 aa)) are nuclease domain. Position 240 (Glu-240) interacts with Mg(2+). Glu-240, Glu-276, His-360, and Pro-365 together coordinate substrate. Asp-410 is a binding site for Mg(2+). Asp-410 acts as the Proton donor/acceptor in catalysis. Positions 412, 479, and 484 each coordinate substrate.

The protein belongs to the CCR4/nocturin family. Component of the CCR4-NOT complex; distinct complexes seem to exist that differ in the participation of probably mutually exclusive catalytic subunits; the complex contains two deadenylase subunits, CNOT6 or CNOT6L, and CNOT7 or CNOT8. Interacts with CNOT1, CNOT3, CNOT7, CNOT8 and CNOT9. Interacts with TOB1. Interacts with NANOS2. Interacts with ZFP36. Interacts with ZFP36L2. Interacts with RBM46. Mg(2+) serves as cofactor.

Its subcellular location is the cytoplasm. The protein resides in the nucleus. It catalyses the reaction Exonucleolytic cleavage of poly(A) to 5'-AMP.. In terms of biological role, poly(A) nuclease with 3'-5' RNase activity. Catalytic component of the CCR4-NOT complex which is one of the major cellular mRNA deadenylases and is linked to various cellular processes including bulk mRNA degradation, miRNA-mediated repression, translational repression during translational initiation and general transcription regulation. Additional complex functions may be a consequence of its influence on mRNA expression. Involved in mRNA decay mediated by the major-protein-coding determinant of instability (mCRD) of the FOS gene in the cytoplasm. Involved in deadenylation-dependent degradation of CDKN1B mRNA. Its mRNA deadenylase activity can be inhibited by TOB1. Mediates cell proliferation and cell survival and prevents cellular senescence. The sequence is that of CCR4-NOT transcription complex subunit 6-like (Cnot6l) from Mus musculus (Mouse).